The chain runs to 576 residues: CTP synthase (576 aa).

The 255-residue stretch at 305–559 (QIALVGKYTH…LGLVAAAANI (255 aa)) folds into the Glutamine amidotransferase type-1 domain. Catalysis depends on for GATase activity residues Cys-404, His-535, and Glu-537.

Belongs to the CTP synthase family.

The enzyme catalyses UTP + L-glutamine + ATP + H2O = CTP + L-glutamate + ADP + phosphate + 2 H(+). It participates in pyrimidine metabolism; CTP biosynthesis via de novo pathway; CTP from UDP: step 2/2. In terms of biological role, catalyzes the ATP-dependent amination of UTP to CTP with either L-glutamine or ammonia as the source of nitrogen. The protein is CTP synthase (URA7) of Eremothecium gossypii (strain ATCC 10895 / CBS 109.51 / FGSC 9923 / NRRL Y-1056) (Yeast).